Reading from the N-terminus, the 810-residue chain is F-BAR domain only protein 2 (810 aa).

Residues 3–250 (MAYFVENFWG…NMANTTVESL (248 aa)) enclose the F-BAR domain. The mediates dimerization and binding to membranes enriched in Pi(4,5)-P2 and induces their tubulation stretch occupies residues 3–274 (MAYFVENFWG…PGLIEFEECD (272 aa)). The stretch at 87 to 156 (HLDLVRKLQE…CVEQERLKKE (70 aa)) forms a coiled coil. Lysine 297 participates in a covalent cross-link: Glycyl lysine isopeptide (Lys-Gly) (interchain with G-Cter in SUMO2). The segment at 301-352 (DAESVECPDADSLNIPDVDEEGYSIKPETNQNDTKENHFYSSSDSDSEDEEP) is disordered. The residue at position 312 (serine 312) is a Phosphoserine. Threonine 385 is modified (phosphothreonine). Phosphoserine is present on residues serine 387, serine 394, and serine 403. Positions 403–537 (SNEELTKSKP…VSRGPSPVSL (135 aa)) are disordered. Over residues 433 to 456 (PSLDSSSSSSLTSSSSARPTTPLS) the composition is skewed to low complexity. Phosphoserine is present on residues serine 488, serine 493, serine 496, serine 508, serine 510, serine 511, and serine 533. A compositionally biased stretch (low complexity) spans 502 to 521 (PLARAESSSSISSSASLSAA). Positions 521-810 (ANTPTVGVSR…FATGRYLADC (290 aa)) are mediates interaction with DAB2, EPS15, EPS15R and ITSN1. An MHD domain is found at 542 to 809 (TLPVAVALTE…RFATGRYLAD (268 aa)).

Belongs to the FCHO family. As to quaternary structure, homodimer; disulfide-linked. May form homotetramer. Interacts with AP2A1. Interacts with EPS15, EPS15R, ITSN1 and ITSN2; recruit those scaffolding proteins which in turn may interact with the adaptor protein complex AP-2 at the plasma membrane. Interacts with DAB2 (via DPF motifs); mediates LDL receptor/LDLR endocytosis. Post-translationally, ubiquitinated. Mainly undergoes monoubiquitination but also polyubiquitination.

Its subcellular location is the membrane. It is found in the clathrin-coated pit. In terms of biological role, functions in an early step of clathrin-mediated endocytosis. Has both a membrane binding/bending activity and the ability to recruit proteins essential to the formation of functional clathrin-coated pits. Has a lipid-binding activity with a preference for membranes enriched in phosphatidylserine and phosphoinositides (Pi(4,5) biphosphate) like the plasma membrane. Its membrane-bending activity might be important for the subsequent action of clathrin and adaptors in the formation of clathrin-coated vesicles. Involved in adaptor protein complex AP-2-dependent endocytosis of the transferrin receptor, it also functions in the AP-2-independent endocytosis of the LDL receptor. This chain is F-BAR domain only protein 2 (FCHO2), found in Pongo abelii (Sumatran orangutan).